A 370-amino-acid polypeptide reads, in one-letter code: Peptidyl-prolyl cis-trans isomerase D (370 aa).

Phosphoserine is present on Ser-5. One can recognise a PPIase cyclophilin-type domain in the interval 19-183 (FFDVDIGGER…KLCVIAECGE (165 aa)). At Lys-171 the chain carries N6-acetyllysine. The tract at residues 185-215 (KEGDDWGIFPKDGSGDSHPDFPEDADIDLKD) is chaperone activity. At Ser-198 the chain carries Phosphoserine. Residues 214–370 (KDVDKILLIS…EKAVYAKMFA (157 aa)) are interaction with HSP90AB1. 3 TPR repeats span residues 223–256 (SEDL…VDSS), 273–306 (LSCV…DPSN), and 307–340 (TKAL…APGD).

This sequence belongs to the cyclophilin-type PPIase family. PPIase D subfamily. Identified in ESR1 or NR3C1/GCR steroid receptor-chaperone complexes. Found in HSP90 chaperone complexes with kinase clients LCK or EIF2AK1. Two monomers associate with one HSP90 homodimer. Interacts with HSP90AA1. Interacts with HSP90AB1; PPID and FKBP4 compete for binding to HSP90AB1 and the interaction is mutually exclusive with the PPID:HSPA8 interaction. Interacts with HSPA8; PPID and STIP1 but not FKBP4 compete for binding to HSPA8 and the interaction is mutually exclusive with the PPID:HSP90AB1 interaction. Interacts with S100A1 and S100A2; the interactions dissociate the PPID:HSP90AA1 interaction. Interacts with S100A6. Interacts with MYB, ILF2, XRCC6, RACK1 and RPS3. Interacts with cytoplasmic dynein 1 intermediate chain (DYNC1I1 or DYNC1I2).

It localises to the cytoplasm. It is found in the nucleus. Its subcellular location is the nucleolus. The protein localises to the nucleoplasm. It carries out the reaction [protein]-peptidylproline (omega=180) = [protein]-peptidylproline (omega=0). Less sensitive to inhibition by cyclosporin A than is CYP-18. PPIase that catalyzes the cis-trans isomerization of proline imidic peptide bonds in oligopeptides and may therefore assist protein folding. Proposed to act as a co-chaperone in HSP90 complexes such as in unligated steroid receptors heterocomplexes. Different co-chaperones seem to compete for association with HSP90 thus establishing distinct HSP90-co-chaperone-receptor complexes with the potential to exert tissue-specific receptor activity control. May have a preference for estrogen receptor complexes and is not found in glucocorticoid receptor complexes. May be involved in cytoplasmic dynein-dependent movement of the receptor from the cytoplasm to the nucleus. May regulate MYB by inhibiting its DNA-binding activity. Involved in regulation of AHR signaling by promoting the formation of the AHR:ARNT dimer; the function is independent of HSP90 but requires the chaperone activity region. Involved in regulation of UV radiation-induced apoptosis. The sequence is that of Peptidyl-prolyl cis-trans isomerase D from Mus musculus (Mouse).